Reading from the N-terminus, the 666-residue chain is DNA mismatch repair protein MutL (666 aa).

Belongs to the DNA mismatch repair MutL/HexB family.

In terms of biological role, this protein is involved in the repair of mismatches in DNA. It is required for dam-dependent methyl-directed DNA mismatch repair. May act as a 'molecular matchmaker', a protein that promotes the formation of a stable complex between two or more DNA-binding proteins in an ATP-dependent manner without itself being part of a final effector complex. This chain is DNA mismatch repair protein MutL, found in Clostridium botulinum (strain Okra / Type B1).